The primary structure comprises 63 residues: Small ribosomal subunit protein bS21 (63 aa).

It belongs to the bacterial ribosomal protein bS21 family.

The polypeptide is Small ribosomal subunit protein bS21 (Bacteroides fragilis (strain ATCC 25285 / DSM 2151 / CCUG 4856 / JCM 11019 / LMG 10263 / NCTC 9343 / Onslow / VPI 2553 / EN-2)).